Consider the following 357-residue polypeptide: Large ribosomal subunit protein mL45 (357 aa).

The tract at residues 333 to 357 is disordered; that stretch reads EAKALPLRTTEKLEEAKKEKEQQEI. Positions 341 to 357 are enriched in basic and acidic residues; the sequence is TTEKLEEAKKEKEQQEI.

This sequence belongs to the mitochondrion-specific ribosomal protein mL45 family.

The protein localises to the mitochondrion. The chain is Large ribosomal subunit protein mL45 (mrpl-45) from Caenorhabditis elegans.